A 543-amino-acid polypeptide reads, in one-letter code: Chaperonin GroEL (543 aa).

ATP contacts are provided by residues T29 to P32, D86 to T90, G413, N478 to A480, and D494.

The protein belongs to the chaperonin (HSP60) family. Forms a cylinder of 14 subunits composed of two heptameric rings stacked back-to-back. Interacts with the co-chaperonin GroES.

The protein resides in the cytoplasm. It catalyses the reaction ATP + H2O + a folded polypeptide = ADP + phosphate + an unfolded polypeptide.. Functionally, together with its co-chaperonin GroES, plays an essential role in assisting protein folding. The GroEL-GroES system forms a nano-cage that allows encapsulation of the non-native substrate proteins and provides a physical environment optimized to promote and accelerate protein folding. This Lactobacillus gasseri (strain ATCC 33323 / DSM 20243 / BCRC 14619 / CIP 102991 / JCM 1131 / KCTC 3163 / NCIMB 11718 / NCTC 13722 / AM63) protein is Chaperonin GroEL.